A 657-amino-acid chain; its full sequence is Bifunctional lysine-specific demethylase and histidyl-hydroxylase NO66 (657 aa).

2 disordered regions span residues 1 to 141 (MQKA…QTSP) and 165 to 198 (KSCPLPSKKDSVTKSPMTVHEAPKVDSATSNSNE). The span at 32-41 (SAKTVDTVTD) shows a compositional bias: polar residues. Residues 55–71 (AEKERRKYLQARVRAEG) are compositionally biased toward basic and acidic residues. Polar residues-rich tracts occupy residues 73 to 84 (SASTSSKSNATR) and 132 to 141 (RSQGLEQTSP). Serine 133 is subject to Phosphoserine. Position 139 is a phosphothreonine (threonine 139). Serine 140 carries the post-translational modification Phosphoserine. Residues 315–454 (NPSTYLLGLR…NLLETLMPIV (140 aa)) enclose the JmjC domain. Histidine 355, aspartate 357, and histidine 420 together coordinate Fe cation.

It belongs to the ROX family. NO66 subfamily. Requires Fe(2+) as cofactor.

The protein localises to the nucleus. The catalysed reaction is N(6),N(6)-dimethyl-L-lysyl(36)-[histone H3] + 2 2-oxoglutarate + 2 O2 = L-lysyl(36)-[histone H3] + 2 formaldehyde + 2 succinate + 2 CO2. In terms of biological role, oxygenase that can act as both a histone lysine demethylase and a ribosomal histidine hydroxylase. Specifically demethylates 'Lys-4' (H3K4me) and 'Lys-36' (H3K36me) of histone H3, thereby playing a central role in histone code. The polypeptide is Bifunctional lysine-specific demethylase and histidyl-hydroxylase NO66 (Drosophila erecta (Fruit fly)).